We begin with the raw amino-acid sequence, 240 residues long: Pro-opiomelanocortin B (240 aa).

The first 36 residues, 1–36 (MFGTFLQNQSVRLNMVCAPWLLAVVVVCVCNPGVEG), serve as a signal peptide directing secretion. Pyrrolidone carboxylic acid is present on Gln-37. A propeptide is located at residue His-111. Position 112 is an N-acetylserine; in Corticotropin (Ser-112). Ile-124 is modified (isoleucine amide).

This sequence belongs to the POMC family. Post-translationally, specific enzymatic cleavages at paired basic residues yield the different active peptides. In terms of processing, acetylation of beta-endorphin occurs in a tissue-specific manner. As to expression, pituitary and hypothalamus of adult diploid animals.

It is found in the secreted. Functionally, stimulates the adrenal glands to release cortisol. Its function is as follows. Melanocyte-stimulating hormone alpha: Anorexigenic peptide. Increases the pigmentation of skin by increasing melanin production in melanocytes. Melanocyte-stimulating hormone beta: Increases the pigmentation of skin by increasing melanin production in melanocytes. In terms of biological role, beta-endorphin: Endogenous orexigenic opiate. Functionally, endogenous opiate. In Oncorhynchus mykiss (Rainbow trout), this protein is Pro-opiomelanocortin B (pomcb).